The following is a 278-amino-acid chain: Tryptophan synthase alpha chain (278 aa).

Catalysis depends on proton acceptor residues E50 and D61.

This sequence belongs to the TrpA family. As to quaternary structure, tetramer of two alpha and two beta chains.

It carries out the reaction (1S,2R)-1-C-(indol-3-yl)glycerol 3-phosphate + L-serine = D-glyceraldehyde 3-phosphate + L-tryptophan + H2O. Its pathway is amino-acid biosynthesis; L-tryptophan biosynthesis; L-tryptophan from chorismate: step 5/5. In terms of biological role, the alpha subunit is responsible for the aldol cleavage of indoleglycerol phosphate to indole and glyceraldehyde 3-phosphate. In Rhodopseudomonas palustris (strain ATCC BAA-98 / CGA009), this protein is Tryptophan synthase alpha chain.